The sequence spans 641 residues: Phosphomethylpyrimidine synthase (641 aa).

Residues 1–12 (MTDTSTQNTATP) show a composition bias toward polar residues. The tract at residues 1–25 (MTDTSTQNTATPTDEYGAEIHPKHS) is disordered. Substrate-binding positions include Asn200, Met229, Tyr258, His294, 314–316 (SRG), 355–358 (DGLR), and Glu394. Zn(2+) is bound at residue His398. Tyr421 provides a ligand contact to substrate. His462 serves as a coordination point for Zn(2+). Positions 542, 545, and 550 each coordinate [4Fe-4S] cluster.

This sequence belongs to the ThiC family. It depends on [4Fe-4S] cluster as a cofactor.

The enzyme catalyses 5-amino-1-(5-phospho-beta-D-ribosyl)imidazole + S-adenosyl-L-methionine = 4-amino-2-methyl-5-(phosphooxymethyl)pyrimidine + CO + 5'-deoxyadenosine + formate + L-methionine + 3 H(+). The protein operates within cofactor biosynthesis; thiamine diphosphate biosynthesis. In terms of biological role, catalyzes the synthesis of the hydroxymethylpyrimidine phosphate (HMP-P) moiety of thiamine from aminoimidazole ribotide (AIR) in a radical S-adenosyl-L-methionine (SAM)-dependent reaction. This is Phosphomethylpyrimidine synthase from Corynebacterium jeikeium (strain K411).